The following is a 403-amino-acid chain: 5,7-dihydroxy-2-methylchromone synthase (403 aa).

CoA is bound at residue histidine 68. Cysteine 174 is a catalytic residue. Cysteine 174 is subject to Cysteine sulfinic acid (-SO2H). Residues leucine 277, serine 281, and 318-321 (GGRA) contribute to the CoA site.

The protein belongs to the thiolase-like superfamily. Chalcone/stilbene synthases family. Homodimer.

It catalyses the reaction 5 malonyl-CoA + 4 H(+) = 5,7-dihydroxy-2-methyl-4H-chromen-4-one + 5 CO2 + 5 CoA + H2O. The protein operates within secondary metabolite biosynthesis; flavonoid biosynthesis. Functionally, catalyzes the iterative condensations of 5 molecules of malonyl-CoA to produce a pentaketide 5,7-dihydroxy-2-methylchromone. The chain is 5,7-dihydroxy-2-methylchromone synthase from Aloe arborescens (Kidachi aloe).